Here is a 504-residue protein sequence, read N- to C-terminus: Maturase K (504 aa).

This sequence belongs to the intron maturase 2 family. MatK subfamily.

The protein resides in the plastid. It localises to the chloroplast. Usually encoded in the trnK tRNA gene intron. Probably assists in splicing its own and other chloroplast group II introns. The sequence is that of Maturase K from Adansonia digitata (Baobab tree).